We begin with the raw amino-acid sequence, 100 residues long: Putative insulin-like peptide beta-type 6 (100 aa).

A signal peptide spans 1 to 18 (MHSIVALMLIGTILPIAA). 4 disulfides stabilise this stretch: Cys54–Cys83, Cys66–Cys96, Cys70–Cys97, and Cys82–Cys87.

This sequence belongs to the insulin family.

The protein resides in the secreted. This is Putative insulin-like peptide beta-type 6 (ins-5) from Caenorhabditis elegans.